The chain runs to 202 residues: ATP-dependent Clp protease proteolytic subunit (202 aa).

Ser-106 functions as the Nucleophile in the catalytic mechanism. His-131 is a catalytic residue.

This sequence belongs to the peptidase S14 family. Fourteen ClpP subunits assemble into 2 heptameric rings which stack back to back to give a disk-like structure with a central cavity, resembling the structure of eukaryotic proteasomes.

It is found in the cytoplasm. It catalyses the reaction Hydrolysis of proteins to small peptides in the presence of ATP and magnesium. alpha-casein is the usual test substrate. In the absence of ATP, only oligopeptides shorter than five residues are hydrolyzed (such as succinyl-Leu-Tyr-|-NHMec, and Leu-Tyr-Leu-|-Tyr-Trp, in which cleavage of the -Tyr-|-Leu- and -Tyr-|-Trp bonds also occurs).. Functionally, cleaves peptides in various proteins in a process that requires ATP hydrolysis. Has a chymotrypsin-like activity. Plays a major role in the degradation of misfolded proteins. This Methylibium petroleiphilum (strain ATCC BAA-1232 / LMG 22953 / PM1) protein is ATP-dependent Clp protease proteolytic subunit.